Here is a 580-residue protein sequence, read N- to C-terminus: Putative adenine deaminase YerA (580 aa).

Position 399 is a phosphoserine (S399).

It belongs to the metallo-dependent hydrolases superfamily. Adenine deaminase family.

It carries out the reaction adenine + H2O + H(+) = hypoxanthine + NH4(+). In Bacillus subtilis (strain 168), this protein is Putative adenine deaminase YerA (yerA).